A 67-amino-acid polypeptide reads, in one-letter code: Probable Sec-independent protein translocase protein TatE (67 aa).

Residues 4-21 traverse the membrane as a helical segment; sequence ISITKLLVVAALVVLLFG. The interval 46–67 is disordered; that stretch reads EDAGAKKEAGGDIQAEKLSHKE.

It belongs to the TatA/E family. TatE subfamily.

The protein localises to the cell inner membrane. In terms of biological role, part of the twin-arginine translocation (Tat) system that transports large folded proteins containing a characteristic twin-arginine motif in their signal peptide across membranes. TatE shares overlapping functions with TatA. The polypeptide is Probable Sec-independent protein translocase protein TatE (Citrobacter koseri (strain ATCC BAA-895 / CDC 4225-83 / SGSC4696)).